The chain runs to 57 residues: DNA gyrase inhibitor YacG (57 aa).

Positions 5, 8, 20, and 24 each coordinate Zn(2+).

The protein belongs to the DNA gyrase inhibitor YacG family. In terms of assembly, interacts with GyrB. Zn(2+) serves as cofactor.

Its function is as follows. Inhibits all the catalytic activities of DNA gyrase by preventing its interaction with DNA. Acts by binding directly to the C-terminal domain of GyrB, which probably disrupts DNA binding by the gyrase. This is DNA gyrase inhibitor YacG from Caulobacter vibrioides (strain ATCC 19089 / CIP 103742 / CB 15) (Caulobacter crescentus).